We begin with the raw amino-acid sequence, 145 residues long: Ribonuclease H (145 aa).

The RNase H type-1 domain maps to 1 to 141; sequence MQEVIIYSDG…ADALANRGVA (141 aa). Mg(2+) contacts are provided by Asp9, Glu47, Asp69, and Asp133.

The protein belongs to the RNase H family. Monomer. The cofactor is Mg(2+).

Its subcellular location is the cytoplasm. The enzyme catalyses Endonucleolytic cleavage to 5'-phosphomonoester.. Its function is as follows. Endonuclease that specifically degrades the RNA of RNA-DNA hybrids. In Cupriavidus pinatubonensis (strain JMP 134 / LMG 1197) (Cupriavidus necator (strain JMP 134)), this protein is Ribonuclease H.